We begin with the raw amino-acid sequence, 335 residues long: HTH-type transcriptional regulator LacR (335 aa).

The region spanning 1–58 is the HTH lacI-type domain; sequence MRTIKEIALESGYSPATVSRLLNNDPNLSITADTKNKILEIANKLGYWEDHQEKKIKP. The segment at residues 4 to 23 is a DNA-binding region (H-T-H motif); the sequence is IKEIALESGYSPATVSRLLN.

It participates in carbohydrate metabolism; lactose degradation [regulation]. Its function is as follows. Negatively regulates the transcription of the lactose utilization genes lacL and lacM. In Lactobacillus helveticus (Lactobacillus suntoryeus), this protein is HTH-type transcriptional regulator LacR (lacR).